The following is a 147-amino-acid chain: Low molecular weight protein-tyrosine-phosphatase Wzb (147 aa).

Catalysis depends on C9, which acts as the Nucleophile. The active site involves R15. D115 functions as the Proton donor in the catalytic mechanism.

Belongs to the low molecular weight phosphotyrosine protein phosphatase family.

The catalysed reaction is O-phospho-L-tyrosyl-[protein] + H2O = L-tyrosyl-[protein] + phosphate. It functions in the pathway glycan metabolism; exopolysaccharide biosynthesis. Its function is as follows. Dephosphorylates Wzc. Required for the extracellular polysaccharide colanic acid synthesis. Probably involved in the export of colanic acid from the cell to medium. Involved in protection of cells against contact-dependent growth inhibition (CDI). The chain is Low molecular weight protein-tyrosine-phosphatase Wzb (wzb) from Escherichia coli O157:H7.